The chain runs to 96 residues: MPGKIAVEVAYALPEKQYLQRVTLQEGATVEEAIRASGLLELRTDIDLTKNKVGIYSRPAKLSDSVHDGDRVEIYRPLIADPKELRRQRAEKSANK.

It belongs to the UPF0125 (RnfH) family.

This chain is Protein RnfH, found in Escherichia coli O139:H28 (strain E24377A / ETEC).